The chain runs to 423 residues: Gamma-glutamyl phosphate reductase (423 aa).

Belongs to the gamma-glutamyl phosphate reductase family.

Its subcellular location is the cytoplasm. It catalyses the reaction L-glutamate 5-semialdehyde + phosphate + NADP(+) = L-glutamyl 5-phosphate + NADPH + H(+). The protein operates within amino-acid biosynthesis; L-proline biosynthesis; L-glutamate 5-semialdehyde from L-glutamate: step 2/2. Its function is as follows. Catalyzes the NADPH-dependent reduction of L-glutamate 5-phosphate into L-glutamate 5-semialdehyde and phosphate. The product spontaneously undergoes cyclization to form 1-pyrroline-5-carboxylate. This is Gamma-glutamyl phosphate reductase from Burkholderia orbicola (strain AU 1054).